The following is a 634-amino-acid chain: Probable LRR receptor-like serine/threonine-protein kinase At2g23950 (634 aa).

An N-terminal signal peptide occupies residues 1–27; it reads MVVMKLITMKIFSVLLLLCFFVTCSLS. Residues 28–236 are Extracellular-facing; the sequence is SEPRNPEVEA…SSGRRTNILA (209 aa). N-linked (GlcNAc...) asparagine glycosylation is found at N96 and N109. LRR repeat units lie at residues 99 to 121, 123 to 145, 147 to 167, and 171 to 193; these read NLRQ…ICSL, KLQT…VNQL, NLQY…ASLS, and HLSF…PART. The N-linked (GlcNAc...) asparagine glycan is linked to N155. Residues 237–257 traverse the membrane as a helical segment; the sequence is VALGVSLGFAVSVILSLGFIW. Over 258 to 634 the chain is Cytoplasmic; sequence YRKKQRRLTM…SFAMELSGPR (377 aa). T296 is subject to Phosphothreonine. Residues 299–554 form the Protein kinase domain; it reads FSSKSILGAG…QVALLCTQFL (256 aa). An ATP-binding site is contributed by 305 to 313; sequence LGAGGFGNV. Phosphothreonine is present on T322. K327 is an ATP binding site. S380 and S383 each carry phosphoserine. Residue T395 is modified to Phosphothreonine. D422 serves as the catalytic Proton acceptor. T455, T456, and T461 each carry phosphothreonine. At Y469 the chain carries Phosphotyrosine. S471 carries the phosphoserine modification. T472 carries the post-translational modification Phosphothreonine. Phosphoserine is present on S476. T551 carries the phosphothreonine modification.

It belongs to the protein kinase superfamily. Ser/Thr protein kinase family.

The protein resides in the membrane. It catalyses the reaction L-seryl-[protein] + ATP = O-phospho-L-seryl-[protein] + ADP + H(+). The enzyme catalyses L-threonyl-[protein] + ATP = O-phospho-L-threonyl-[protein] + ADP + H(+). This Arabidopsis thaliana (Mouse-ear cress) protein is Probable LRR receptor-like serine/threonine-protein kinase At2g23950.